Reading from the N-terminus, the 491-residue chain is Protein OrfX3 (491 aa).

Belongs to the TULIP P47 family. In terms of assembly, heterodimer of OrfX1 and OrfX3; crystallizes as a dimer of heterodimers.

In terms of biological role, expression of the ptox operon (ntnh-orfX1-orfX2-orfX3-pmp1) in B.thuringiensis kills Anopheles but not Aedes mosquito 3rd instar larvae. The ntnh-pmp1 construct is about half as toxic. This chain is Protein OrfX3, found in Paraclostridium bifermentans (Clostridium bifermentans).